The sequence spans 489 residues: uncharacterized protein (489 aa).

Phosphothreonine is present on Thr26. Ser27 carries the post-translational modification Phosphoserine. 3 consecutive transmembrane segments (helical) span residues Ile63 to Ala83, Leu182 to Ala202, and Val221 to Leu241. Disordered regions lie at residues Pro260 to Glu312, Ser401 to Ser435, and Pro450 to His489. Residue Ser263 is modified to Phosphoserine. The segment covering Gln268–Asn282 has biased composition (polar residues). Positions Pro450–Asn465 are enriched in polar residues. Residues Ser477–His489 are compositionally biased toward low complexity.

Its subcellular location is the endoplasmic reticulum membrane. This is an uncharacterized protein from Schizosaccharomyces pombe (strain 972 / ATCC 24843) (Fission yeast).